Here is a 346-residue protein sequence, read N- to C-terminus: NADH-ubiquinone oxidoreductase chain 2 (346 aa).

11 helical membrane passes run 1 to 21, 25 to 45, 60 to 80, 95 to 115, 124 to 144, 149 to 169, 178 to 195, 200 to 219, 242 to 262, 274 to 294, and 326 to 346; these read MNPH…TITI, HWVL…PLIS, FLTQ…NAWA, CLLL…HFWF, LMTA…LLLM, LNPA…GWMG, ILAF…IILV, LALL…FMAL, ATLM…GFMP, EMTP…FFYL, and AILA…HAIV.

This sequence belongs to the complex I subunit 2 family.

Its subcellular location is the mitochondrion inner membrane. The catalysed reaction is a ubiquinone + NADH + 5 H(+)(in) = a ubiquinol + NAD(+) + 4 H(+)(out). Core subunit of the mitochondrial membrane respiratory chain NADH dehydrogenase (Complex I) that is believed to belong to the minimal assembly required for catalysis. Complex I functions in the transfer of electrons from NADH to the respiratory chain. The immediate electron acceptor for the enzyme is believed to be ubiquinone. The sequence is that of NADH-ubiquinone oxidoreductase chain 2 (MT-ND2) from Mareca falcata (Falcated duck).